A 475-amino-acid chain; its full sequence is Proton-coupled amino acid transporter 1 (475 aa).

The segment covering 1–15 has biased composition (basic and acidic residues); the sequence is MSTQRLRNEDYHDYS. Residues 1 to 32 form a disordered region; the sequence is MSTQRLRNEDYHDYSSTDVSPEESPSEGLGSF. The Cytoplasmic portion of the chain corresponds to 1 to 50; sequence MSTQRLRNEDYHDYSSTDVSPEESPSEGLGSFSPGSYQRLGENSSMTWFQ. A helical transmembrane segment spans residues 51–71; the sequence is TLIHLLKGNIGTGLLGLPLAV. Residues 72-77 are Extracellular-facing; the sequence is KNAGLL. The chain crosses the membrane as a helical span at residues 78-98; the sequence is LGPLSLLVIGIVAVHCMGILV. Residues 99–140 are Cytoplasmic-facing; sequence KCAHHLCRRLNKPFLDYGDTVMYGLECSPSTWIRNHSHWGRR. The helical transmembrane segment at 141-161 threads the bilayer; that stretch reads IVDFFLVVTQLGFCCVYFVFL. The Extracellular segment spans residues 162–189; it reads ADNFKQVIEAANGTTTNCNNNETVILTP. 2 N-linked (GlcNAc...) asparagine glycosylation sites follow: Asn173 and Asn182. A disulfide bond links Cys179 and Cys328. A helical membrane pass occupies residues 190–210; sequence TMDSRLYMLTFLPFLVLLSFI. The Cytoplasmic segment spans residues 211–214; it reads RNLR. The chain crosses the membrane as a helical span at residues 215–235; sequence ILSIFSLLANISMFVSLIMIY. At 236–256 the chain is on the extracellular side; sequence QFIVQRIPDPSHLPLVAPWKT. A helical membrane pass occupies residues 257–277; it reads YPLFFGTAIFAFEGIGVVLPL. Topologically, residues 278–288 are cytoplasmic; the sequence is ENKMKDSQKFP. The chain crosses the membrane as a helical span at residues 289–309; the sequence is LILYLGMAIITVLYISLGSLG. Over 310–341 the chain is Extracellular; that stretch reads YLQFGADIKGSITLNLPNCWLYQSVKLLYSIG. The chain crosses the membrane as a helical span at residues 342 to 362; the sequence is IFFTYALQFYVAAEIIIPAIV. Residues 363–371 lie on the Cytoplasmic side of the membrane; the sequence is SRVPERFEL. The helical transmembrane segment at 372 to 392 threads the bilayer; it reads VVDLSARTAMVCVTCVLAVLI. At 393–396 the chain is on the extracellular side; the sequence is PRLD. Residues 397–417 traverse the membrane as a helical segment; that stretch reads LVISLVGSVSSSALALIIPPL. Residues 418 to 438 lie on the Cytoplasmic side of the membrane; it reads LEVTTYYGEGISPLTITKDAL. A helical membrane pass occupies residues 439-459; that stretch reads ISILGFVGFVVGTYESLWELI. Residues 460-475 lie on the Extracellular side of the membrane; that stretch reads QPSHSDSSTNSTSAFI. An N-linked (GlcNAc...) asparagine glycan is attached at Asn469.

The protein belongs to the amino acid/polyamine transporter 2 family. In terms of tissue distribution, widely expressed and predominantly expressed in brain. Within the brain, expression restricted to neurons and not detected in glial cells. Abundant in regions rich in neurons using glutamate and GABA such as Purkinje cells in the cerebellum and pyramidal cells in the hippocampus.

The protein localises to the cell membrane. The protein resides in the apical cell membrane. Its subcellular location is the lysosome membrane. The enzyme catalyses glycine(in) + H(+)(in) = glycine(out) + H(+)(out). It carries out the reaction L-proline(out) + H(+)(out) = L-proline(in) + H(+)(in). The catalysed reaction is D-proline(out) + H(+)(out) = D-proline(in) + H(+)(in). It catalyses the reaction L-alanine(in) + H(+)(in) = L-alanine(out) + H(+)(out). The enzyme catalyses D-alanine(in) + H(+)(in) = D-alanine(out) + H(+)(out). It carries out the reaction L-serine(in) + H(+)(in) = L-serine(out) + H(+)(out). The catalysed reaction is D-serine(out) + H(+)(out) = D-serine(in) + H(+)(in). It catalyses the reaction 4-aminobutanoate(in) + H(+)(in) = 4-aminobutanoate(out) + H(+)(out). The enzyme catalyses beta-alanine(in) + H(+)(in) = beta-alanine(out) + H(+)(out). Functionally, electrogenic proton/amino acid symporter with selectivity for small apolar L-amino acids, their D-enantiomers and selected amino acid derivatives such as 4-aminobutanoate/GABA. May be involved in the efflux from the lysosomal compartment of neutral amino acids resulting from proteolysis. May play a role in specifying sites for exocytosis in neurons. The protein is Proton-coupled amino acid transporter 1 of Rattus norvegicus (Rat).